Consider the following 401-residue polypeptide: Argininosuccinate synthase (401 aa).

8–16 (AYSGGLDTS) contributes to the ATP binding site. Tyr87 serves as a coordination point for L-citrulline. Residue Gly117 participates in ATP binding. Thr119, Asn123, and Asp124 together coordinate L-aspartate. Asn123 provides a ligand contact to L-citrulline. Positions 127, 175, 259, and 271 each coordinate L-citrulline.

This sequence belongs to the argininosuccinate synthase family. Type 1 subfamily. In terms of assembly, homotetramer.

It localises to the cytoplasm. The enzyme catalyses L-citrulline + L-aspartate + ATP = 2-(N(omega)-L-arginino)succinate + AMP + diphosphate + H(+). The protein operates within amino-acid biosynthesis; L-arginine biosynthesis; L-arginine from L-ornithine and carbamoyl phosphate: step 2/3. This Arthrobacter sp. (strain FB24) protein is Argininosuccinate synthase.